A 952-amino-acid chain; its full sequence is Probable RNA-binding protein 19 (952 aa).

In terms of domain architecture, RRM 1 spans 2 to 79; it reads SRLIVKNLPN…TRITVEFCKS (78 aa). Disordered regions lie at residues 85 to 126, 159 to 267, and 367 to 395; these read KPRA…LEKL, KAKT…RGAV, and KQAP…EEED. Low complexity predominate over residues 95–109; the sequence is KSSQPKQPSQDSVPS. Residues 163-180 are compositionally biased toward polar residues; sequence KASSDYLNFDSDSNSDSG. Ser177, Ser179, and Ser183 each carry phosphoserine. Acidic residues-rich tracts occupy residues 181 to 196 and 224 to 251; these read QESE…EEEQ and SSED…EEEG. 2 consecutive RRM domains span residues 293-368 and 400-478; these read YTVK…REKQ and GRLF…PSTI. Lys479 participates in a covalent cross-link: Glycyl lysine isopeptide (Lys-Gly) (interchain with G-Cter in SUMO2). Residues 481–504 are disordered; that stretch reads EASQEANAPGSSYKKKKEAMDKAN. The RRM 4 domain occupies 584 to 656; that stretch reads TVILAKNLPA…VPLYLEWAPI (73 aa). Basic and acidic residues predominate over residues 664–679; sequence QKKDSQHEQPAEKAEV. The tract at residues 664–719 is disordered; it reads QKKDSQHEQPAEKAEVEQETVLDPEGEKASVEGAEASTGKMEEEEEEEEEEEEESI. Ser693 is modified (phosphoserine). Residues 705–718 show a composition bias toward acidic residues; sequence EEEEEEEEEEEEES. RRM domains lie at 722–803 and 824–904; these read CTLF…ISER and SKIL…WADS. Residues Ser928 and Ser944 each carry the phosphoserine modification.

Belongs to the RRM MRD1 family. Expressed in the crypts of Lieberkuhn of the intestine (at protein level).

It is found in the nucleus. It localises to the nucleolus. The protein resides in the nucleoplasm. Its subcellular location is the cytoplasm. The protein localises to the chromosome. Its function is as follows. Plays a role in embryo pre-implantation development. The chain is Probable RNA-binding protein 19 (Rbm19) from Mus musculus (Mouse).